We begin with the raw amino-acid sequence, 285 residues long: Acetylglutamate kinase (285 aa).

Substrate-binding positions include 64-65, R86, and N180; that span reads GG.

This sequence belongs to the acetylglutamate kinase family. ArgB subfamily.

The protein localises to the plastid. Its subcellular location is the chloroplast. It catalyses the reaction N-acetyl-L-glutamate + ATP = N-acetyl-L-glutamyl 5-phosphate + ADP. It participates in amino-acid biosynthesis; L-arginine biosynthesis; N(2)-acetyl-L-ornithine from L-glutamate: step 2/4. Functionally, catalyzes the ATP-dependent phosphorylation of N-acetyl-L-glutamate. The sequence is that of Acetylglutamate kinase from Gracilaria tenuistipitata var. liui (Red alga).